Reading from the N-terminus, the 245-residue chain is Orotidine 5'-phosphate decarboxylase (245 aa).

Residues Asp-22, Lys-44, 71 to 80 (DLKFHDIPNT), Thr-131, Arg-192, Gln-201, Gly-221, and Arg-222 each bind substrate. The active-site Proton donor is the Lys-73.

It belongs to the OMP decarboxylase family. Type 1 subfamily. Homodimer.

The enzyme catalyses orotidine 5'-phosphate + H(+) = UMP + CO2. The protein operates within pyrimidine metabolism; UMP biosynthesis via de novo pathway; UMP from orotate: step 2/2. Catalyzes the decarboxylation of orotidine 5'-monophosphate (OMP) to uridine 5'-monophosphate (UMP). This Yersinia pseudotuberculosis serotype O:1b (strain IP 31758) protein is Orotidine 5'-phosphate decarboxylase.